Here is a 61-residue protein sequence, read N- to C-terminus: Large ribosomal subunit protein uL29 (61 aa).

It belongs to the universal ribosomal protein uL29 family.

In Campylobacter lari (strain RM2100 / D67 / ATCC BAA-1060), this protein is Large ribosomal subunit protein uL29.